The primary structure comprises 490 residues: Betaine aldehyde dehydrogenase (490 aa).

Asn-93 lines the K(+) pocket. 150–152 (GAW) lines the NAD(+) pocket. The Charge relay system role is filled by Lys-162. An NAD(+)-binding site is contributed by 176–179 (KPSE). Position 180 (Val-180) interacts with K(+). Position 230 to 233 (230 to 233 (GTAT)) interacts with NAD(+). Leu-246 contacts K(+). Catalysis depends on Glu-252, which acts as the Proton acceptor. NAD(+) contacts are provided by Gly-254, Cys-286, and Glu-387. The active-site Nucleophile is Cys-286. Cys-286 bears the Cysteine sulfenic acid (-SOH) mark. Lys-457 and Gly-460 together coordinate K(+). Glu-464 functions as the Charge relay system in the catalytic mechanism.

Belongs to the aldehyde dehydrogenase family. Dimer of dimers. It depends on K(+) as a cofactor.

It carries out the reaction betaine aldehyde + NAD(+) + H2O = glycine betaine + NADH + 2 H(+). The protein operates within amine and polyamine biosynthesis; betaine biosynthesis via choline pathway; betaine from betaine aldehyde: step 1/1. In terms of biological role, involved in the biosynthesis of the osmoprotectant glycine betaine. Catalyzes the irreversible oxidation of betaine aldehyde to the corresponding acid. The sequence is that of Betaine aldehyde dehydrogenase from Xanthomonas campestris pv. campestris (strain ATCC 33913 / DSM 3586 / NCPPB 528 / LMG 568 / P 25).